The chain runs to 444 residues: MKVLLIGGGAREHAIAMALKKNELVELYTLMKNKNPGIYALSEEVSFNSETDVPAIKEFAEKIKPEIAVIGPESPLGVGAADLLEEMGIPTVGPKKLPAQIETSKEFMRNLFKKYEIDGSLKYAAFNEYGNEIESFIDEMTSLGKDVVVKPAGLTGGKGVKVVGEQLKDNDEAKIYAKEVFDKSIGGGKIIIEEKLVGVEFTLHGFVDGENITFMPAVQDHPHAYNNDEGPITGGMGSYSCPNHGLPFISEDMLDRAEKIMEKTVNSINLEVGPYKGFLYGQFMLTADGPKIIEYNARFGDPEAMNLLPILKTDFLDVCFAIAEGKLDKMNIEFENKATVCKYVVPNGYPIDPVKNKELAVAEKAIEDAGAILFYASINEENGKLYITGSRSAAVVGISENIEEAEKIAQKAIENFKGEVYYRSDIGTLDLIKKRIERVKKLAK.

The region spanning 109–324 (RNLFKKYEID…FLDVCFAIAE (216 aa)) is the ATP-grasp domain. Residue 140–202 (MTSLGKDVVV…EEKLVGVEFT (63 aa)) coordinates ATP. Residues glutamine 282, glutamate 294, and asparagine 296 each coordinate Mg(2+). 3 residues coordinate Mn(2+): glutamine 282, glutamate 294, and asparagine 296.

The protein belongs to the GARS family. It depends on Mg(2+) as a cofactor. Mn(2+) is required as a cofactor.

The catalysed reaction is 5-phospho-beta-D-ribosylamine + glycine + ATP = N(1)-(5-phospho-beta-D-ribosyl)glycinamide + ADP + phosphate + H(+). The protein operates within purine metabolism; IMP biosynthesis via de novo pathway; N(1)-(5-phospho-D-ribosyl)glycinamide from 5-phospho-alpha-D-ribose 1-diphosphate: step 2/2. This is Phosphoribosylamine--glycine ligase from Methanococcus maripaludis (strain C7 / ATCC BAA-1331).